Here is a 374-residue protein sequence, read N- to C-terminus: Anhydro-N-acetylmuramic acid kinase (374 aa).

9–16 (GTSLDGID) provides a ligand contact to ATP.

Belongs to the anhydro-N-acetylmuramic acid kinase family.

The enzyme catalyses 1,6-anhydro-N-acetyl-beta-muramate + ATP + H2O = N-acetyl-D-muramate 6-phosphate + ADP + H(+). The protein operates within amino-sugar metabolism; 1,6-anhydro-N-acetylmuramate degradation. Its pathway is cell wall biogenesis; peptidoglycan recycling. Catalyzes the specific phosphorylation of 1,6-anhydro-N-acetylmuramic acid (anhMurNAc) with the simultaneous cleavage of the 1,6-anhydro ring, generating MurNAc-6-P. Is required for the utilization of anhMurNAc either imported from the medium or derived from its own cell wall murein, and thus plays a role in cell wall recycling. In Methylobacterium nodulans (strain LMG 21967 / CNCM I-2342 / ORS 2060), this protein is Anhydro-N-acetylmuramic acid kinase.